A 99-amino-acid chain; its full sequence is NADH-quinone oxidoreductase subunit K (99 aa).

Transmembrane regions (helical) follow at residues 2 to 22 (PVEY…LGVL), 28 to 48 (LILM…FLAF), and 60 to 80 (IAFF…AVVI).

It belongs to the complex I subunit 4L family. As to quaternary structure, NDH-1 is composed of 14 different subunits. Subunits NuoA, H, J, K, L, M, N constitute the membrane sector of the complex.

It is found in the cell inner membrane. The catalysed reaction is a quinone + NADH + 5 H(+)(in) = a quinol + NAD(+) + 4 H(+)(out). Functionally, NDH-1 shuttles electrons from NADH, via FMN and iron-sulfur (Fe-S) centers, to quinones in the respiratory chain. The immediate electron acceptor for the enzyme in this species is believed to be ubiquinone. Couples the redox reaction to proton translocation (for every two electrons transferred, four hydrogen ions are translocated across the cytoplasmic membrane), and thus conserves the redox energy in a proton gradient. The chain is NADH-quinone oxidoreductase subunit K from Anaeromyxobacter dehalogenans (strain 2CP-C).